A 230-amino-acid chain; its full sequence is Large ribosomal subunit protein uL1 (230 aa).

The protein belongs to the universal ribosomal protein uL1 family. Part of the 50S ribosomal subunit.

In terms of biological role, binds directly to 23S rRNA. The L1 stalk is quite mobile in the ribosome, and is involved in E site tRNA release. Protein L1 is also a translational repressor protein, it controls the translation of the L11 operon by binding to its mRNA. This is Large ribosomal subunit protein uL1 from Desulforapulum autotrophicum (strain ATCC 43914 / DSM 3382 / VKM B-1955 / HRM2) (Desulfobacterium autotrophicum).